We begin with the raw amino-acid sequence, 381 residues long: Cytochrome b (381 aa).

Transmembrane regions (helical) follow at residues 34-54, 78-99, 114-134, and 179-199; these read FGSL…FLAM, WLIR…YLHI, WNIG…GYVL, and FFAF…IHLL. Residues H84 and H98 each coordinate heme b. Positions 183 and 197 each coordinate heme b. H202 contacts a ubiquinone. Transmembrane regions (helical) follow at residues 227-247, 289-309, 321-341, and 348-368; these read YKDL…ALFM, LGGV…PLLH, LTQI…WIGG, and FITV…IIMP.

Belongs to the cytochrome b family. As to quaternary structure, the cytochrome bc1 complex contains 3 respiratory subunits (MT-CYB, CYC1 and UQCRFS1), 2 core proteins (UQCRC1 and UQCRC2) and probably 6 low-molecular weight proteins. It depends on heme b as a cofactor.

It localises to the mitochondrion inner membrane. Component of the ubiquinol-cytochrome c reductase complex (complex III or cytochrome b-c1 complex) that is part of the mitochondrial respiratory chain. The b-c1 complex mediates electron transfer from ubiquinol to cytochrome c. Contributes to the generation of a proton gradient across the mitochondrial membrane that is then used for ATP synthesis. This is Cytochrome b (mt-cyb) from Sphyrna lewini (Scalloped hammerhead shark).